Here is a 115-residue protein sequence, read N- to C-terminus: Methylmalonyl-CoA decarboxylase subunit delta (115 aa).

Residues 11 to 31 form a helical membrane-spanning segment; sequence WLIMAINMTVVFAVLIALGIL. The tract at residues 46–70 is disordered; sequence EAPAATAPVATPTATPVAPANASAQ. The span at 48-65 shows a compositional bias: low complexity; sequence PAATAPVATPTATPVAPA.

The protein belongs to the OadG family. The methylmalonyl-CoA decarboxylase is composed of five subunits: the carboxyltransferase alpha subunit (MmdA), the tunnel beta subunit (MmdB), the biotin-containing gamma subunit (MmdC), and the delta (MmdD) and epsilon (MmdE) subunits. The N-terminus is blocked.

The protein resides in the cell membrane. The catalysed reaction is (S)-methylmalonyl-CoA + Na(+)(in) + H(+)(out) = propanoyl-CoA + Na(+)(out) + CO2. Completely inhibited by avidin. In terms of biological role, subunit of the sodium ion pump methylmalonyl-CoA decarboxylase, which converts the chemical energy of a decarboxylation reaction into an electrochemical gradient of Na(+) ions across the cytoplasmic membrane, thereby creating a sodium ion motive force that is used for ATP synthesis. The delta subunit is required for catalytic activity as well as for the proper assembly of the individual subunits to an enzyme complex. Can also convert malonyl-CoA into acetyl-CoA. The polypeptide is Methylmalonyl-CoA decarboxylase subunit delta (Veillonella parvula (Staphylococcus parvulus)).